Here is a 235-residue protein sequence, read N- to C-terminus: Aspartate/glutamate leucyltransferase (235 aa).

Belongs to the R-transferase family. Bpt subfamily.

The protein localises to the cytoplasm. It catalyses the reaction N-terminal L-glutamyl-[protein] + L-leucyl-tRNA(Leu) = N-terminal L-leucyl-L-glutamyl-[protein] + tRNA(Leu) + H(+). The enzyme catalyses N-terminal L-aspartyl-[protein] + L-leucyl-tRNA(Leu) = N-terminal L-leucyl-L-aspartyl-[protein] + tRNA(Leu) + H(+). In terms of biological role, functions in the N-end rule pathway of protein degradation where it conjugates Leu from its aminoacyl-tRNA to the N-termini of proteins containing an N-terminal aspartate or glutamate. This chain is Aspartate/glutamate leucyltransferase, found in Pseudomonas fluorescens (strain Pf0-1).